A 309-amino-acid polypeptide reads, in one-letter code: MPIRVPDELPAVNFLREENVFVMTTSRASGQEIRPLKVLILNLMPKKIETENQFLRLLSNSPLQVDIQLLRIDSRESRNTPAEHLNNFYCNFEDIQEQNFDGLIVTGAPLGLVEFNDVAYWPQIKQVLEWSKDHVTSTLFVCWAVQAALNILYGIPKQTRTDKLSGVYEHHILHPHALLTRGFDDSFLAPHSRYADFPAALIRDYTDLEILAETEEGDAYLFASKDKRIAFVTGHPEYDAQTLAQEYFRDVEAGLNPDVPYNYFPHNDPQNTPRASWRSHGNLLFTNWLNYYVYQITPYDLRHMNPTLD.

Cys142 functions as the Acyl-thioester intermediate in the catalytic mechanism. Substrate contacts are provided by Lys163 and Ser192. The active-site Proton acceptor is His235. Glu237 is a catalytic residue. A substrate-binding site is contributed by Arg249.

Belongs to the MetA family. Homodimer.

It is found in the cytoplasm. It carries out the reaction L-homoserine + succinyl-CoA = O-succinyl-L-homoserine + CoA. The protein operates within amino-acid biosynthesis; L-methionine biosynthesis via de novo pathway; O-succinyl-L-homoserine from L-homoserine: step 1/1. Its function is as follows. Transfers a succinyl group from succinyl-CoA to L-homoserine, forming succinyl-L-homoserine. The protein is Homoserine O-succinyltransferase of Escherichia fergusonii (strain ATCC 35469 / DSM 13698 / CCUG 18766 / IAM 14443 / JCM 21226 / LMG 7866 / NBRC 102419 / NCTC 12128 / CDC 0568-73).